The sequence spans 504 residues: ATP synthase subunit alpha (504 aa).

169-176 (GDRGTGKT) contributes to the ATP binding site.

This sequence belongs to the ATPase alpha/beta chains family. In terms of assembly, F-type ATPases have 2 components, CF(1) - the catalytic core - and CF(0) - the membrane proton channel. CF(1) has five subunits: alpha(3), beta(3), gamma(1), delta(1), epsilon(1). CF(0) has three main subunits: a(1), b(2) and c(9-12). The alpha and beta chains form an alternating ring which encloses part of the gamma chain. CF(1) is attached to CF(0) by a central stalk formed by the gamma and epsilon chains, while a peripheral stalk is formed by the delta and b chains.

Its subcellular location is the cell inner membrane. It carries out the reaction ATP + H2O + 4 H(+)(in) = ADP + phosphate + 5 H(+)(out). Its function is as follows. Produces ATP from ADP in the presence of a proton gradient across the membrane. The alpha chain is a regulatory subunit. The protein is ATP synthase subunit alpha of Leptospira biflexa serovar Patoc (strain Patoc 1 / Ames).